Reading from the N-terminus, the 471-residue chain is MNPTTATDAHERTSLLSGRPQSAANSTAPYERQVQPSRKSQCFTPVTVITIITLIYRLATTMVITTNIRVLHTVACQLWYHVNDPDVFPGGNIPEKYCALPGVDKYYAIMVSMTTVIDGLGGILGTGIASYMSSRFGRKPVLMFLLSCTMIDHLAILTVQNVYGWKQLVTFGLIMIVETIGNENTTVFLVSMYVVDVTEAERRTAALSSITGWLVLGGALAYSIGGSITTFLHSNSAVYIVSFSVTGIVLTFTAFVLPESFPAEKRDLLRLERLAETRGHSQSWTQKIKAVATVALEPMELLKPTFNPITGKANWRLVYCALHSFIVTLADAYALPAMLIFFTTQYSYTPAQMGYVMTTYSVSSVFVLAIALPLFIRWFKPLYNNTQTKSVPDEGDGLRATDSGEAGVHTQEVVVSETSDRMDVHITVISWTIESLAYIVLGTVGSFYAQLLGRPLPLLALDLDAFQEFEA.

A disordered region spans residues 1-36; sequence MNPTTATDAHERTSLLSGRPQSAANSTAPYERQVQP. Residues 14–36 show a composition bias toward polar residues; it reads SLLSGRPQSAANSTAPYERQVQP. Residue asparagine 25 is glycosylated (N-linked (GlcNAc...) asparagine). The next 8 membrane-spanning stretches (helical) occupy residues 44-64, 108-128, 140-160, 168-188, 212-232, 237-257, 322-342, and 356-376; these read TPVT…TMVI, AIMV…GTGI, PVLM…LTVQ, LVTF…TTVF, GWLV…TTFL, AVYI…AFVL, LHSF…LIFF, and VMTT…PLFI. An N-linked (GlcNAc...) asparagine glycan is attached at asparagine 384. The helical transmembrane segment at 424–444 threads the bilayer; it reads VHITVISWTIESLAYIVLGTV.

This sequence belongs to the major facilitator superfamily. TCR/Tet family.

The protein resides in the membrane. Major facilitator-type transporter; part of the gene cluster that mediates the biosynthesis of psilocybin, a psychotropic tryptamine-derived natural product. In Psilocybe cyanescens, this protein is Major facilitator-type transporter psiT1.